The sequence spans 508 residues: MDHLGASLWPQVGSLCLLLAGAAWAPPPNLPDPKFESKAALLAARGPEELLCFTERLEDLVCFWEEAASAGVGPGNYSFSYQLEDEPWKLCRLHQAPTARGAVRFWCSLPTADTSSFVPLELRVTAASGAPRYHRVIHINEVVLLDAPVGLVARLADESGHVVLRWLPPPETPMTSHIRYEVDVSAGNGAGSVQRVEILEGRTECVLSNLRGRTRYTFAVRARMAEPSFGGFWSAWSEPVSLLTPSDLDPLILTLSLILVVILVLLTVLALLSHRRALKQKIWPGIPSPESEFEGLFTTHKGNFQLWLYQNDGCLWWSPCTPFTEDPPASLEVLSERCWGTMQAVEPGTDDEGPLLEPVGSEHAQDTYLVLDKWLLPRNPPSEDLPGPGGSVDIVAMDEGSEASSCSSALASKPSPEGASAASFEYTILDPSSQLLRPWTLCPELPPTPPHLKYLYLVVSDSGISTDYSSGDSQGAQGGLSDGPYSNPYENSLIPAAEPLPPSYVACS.

The first 24 residues, 1–24, serve as a signal peptide directing secretion; that stretch reads MDHLGASLWPQVGSLCLLLAGAAW. The Extracellular segment spans residues 25–250; sequence APPPNLPDPK…SLLTPSDLDP (226 aa). A disulfide bond links Cys-52 and Cys-62. Asn-76 carries N-linked (GlcNAc...) asparagine glycosylation. Cys-91 and Cys-107 form a disulfide bridge. Positions 147-247 constitute a Fibronectin type-III domain; the sequence is APVGLVARLA…EPVSLLTPSD (101 aa). The short motif at 233-237 is the WSXWS motif element; that stretch reads WSAWS. The helical transmembrane segment at 251–273 threads the bilayer; it reads LILTLSLILVVILVLLTVLALLS. Over 274 to 508 the chain is Cytoplasmic; sequence HRRALKQKIW…PLPPSYVACS (235 aa). A Glycyl lysine isopeptide (Lys-Gly) (interchain with G-Cter in ubiquitin) cross-link involves residue Lys-281. A Box 1 motif motif is present at residues 282–290; that stretch reads IWPGIPSPE. 2 positions are modified to phosphotyrosine; by JAK2: Tyr-368 and Tyr-426. Positions 452–457 match the ITIM motif motif; it reads LKYLYL. A Glycyl lysine isopeptide (Lys-Gly) (interchain with G-Cter in ubiquitin) cross-link involves residue Lys-453. Phosphotyrosine; by JAK2 occurs at positions 454, 456, 468, 485, 489, and 504. The tract at residues 454-456 is required for high-affinity SOCS3 binding; the sequence is YLY. The interval 467–494 is disordered; the sequence is DYSSGDSQGAQGGLSDGPYSNPYENSLI.

This sequence belongs to the type I cytokine receptor family. Type 1 subfamily. Forms homodimers on EPO stimulation. The tyrosine-phosphorylated form interacts with several SH2 domain-containing proteins including LYN, the adapter protein SH2B2, PTPN6, PTPN11, JAK2, PI3 kinases, STAT5A/B, SOCS3, CRKL. Interacts with INPP5D/SHIP1. SH2B2 binding inhibits the JAK-STAT signaling. Interacts with RHEX; this interaction occurs in a erythropoietin (EPO)-dependent manner. Interacts with ATXN2L. In terms of processing, on EPO stimulation, phosphorylated on C-terminal tyrosine residues by JAK2. The phosphotyrosine motifs are also recruitment sites for several SH2-containing proteins and adapter proteins which mediate cell proliferation. Phosphorylation on Tyr-454 is required for PTPN6 interaction, Tyr-426 for PTPN11. Tyr-426 is also required for SOCS3 binding, but Tyr-454/Tyr-456 motif is the preferred binding site. Post-translationally, ubiquitinated by the ECS(SOCS2) complex following ligand-binding and phosphorylation by JAK2, leading to its degradation by the proteasome. Regulation by the ECS(SOCS2) complex acts as a negative feedback loop of erythropoietin-mediated signaling pathway. Ubiquitination at Lys-281 mediates receptor internalization, whereas ubiquitination at Lys-453 promotes trafficking of activated receptors to the lysosomes for degradation. Ubiquitinated by NOSIP; appears to be either multi-monoubiquitinated or polyubiquitinated. Ubiquitination mediates proliferation and survival of EPO-dependent cells. As to expression, erythroid cells and erythroid progenitor cells. Isoform EPOR-F is the most abundant form in EPO-dependent erythroleukemia cells and in late-stage erythroid progenitors. In terms of tissue distribution, isoform EPOR-S and isoform EPOR-T are the predominant forms in bone marrow. As to expression, isoform EPOR-S and isoform EPOR-T are the predominant forms in bone marrow. Isoform EPOR-T is the most abundant from in early-stage erythroid progenitor cells.

The protein resides in the cell membrane. It is found in the secreted. Functionally, receptor for erythropoietin, which mediates erythropoietin-induced erythroblast proliferation and differentiation. Upon EPO stimulation, EPOR dimerizes triggering the JAK2/STAT5 signaling cascade. In some cell types, can also activate STAT1 and STAT3. May also activate the LYN tyrosine kinase. In terms of biological role, acts as a dominant-negative receptor of EPOR-mediated signaling. This chain is Erythropoietin receptor, found in Homo sapiens (Human).